The chain runs to 215 residues: ATP-dependent dethiobiotin synthetase BioD (215 aa).

Residue 13–18 (DIGKTI) coordinates ATP. Mg(2+) is bound at residue T17. The active site involves K38. T42 contacts substrate. ATP is bound by residues D50, 115–118 (EGAG), and 175–176 (NH). Mg(2+)-binding residues include D50 and E115.

Belongs to the dethiobiotin synthetase family. As to quaternary structure, homodimer. Mg(2+) is required as a cofactor.

The protein localises to the cytoplasm. The enzyme catalyses (7R,8S)-7,8-diammoniononanoate + CO2 + ATP = (4R,5S)-dethiobiotin + ADP + phosphate + 3 H(+). It functions in the pathway cofactor biosynthesis; biotin biosynthesis; biotin from 7,8-diaminononanoate: step 1/2. Its function is as follows. Catalyzes a mechanistically unusual reaction, the ATP-dependent insertion of CO2 between the N7 and N8 nitrogen atoms of 7,8-diaminopelargonic acid (DAPA, also called 7,8-diammoniononanoate) to form a ureido ring. The polypeptide is ATP-dependent dethiobiotin synthetase BioD (Neisseria meningitidis serogroup A / serotype 4A (strain DSM 15465 / Z2491)).